An 80-amino-acid polypeptide reads, in one-letter code: Clavanin-D (80 aa).

An N-terminal signal peptide occupies residues 1–19; sequence MKTTILILLILGLGINAKS. A propeptide spanning residues 20–29 is cleaved from the precursor; that stretch reads LEERKSEEEK. Position 52 is a phenylalanine amide (phenylalanine 52). Residues 54-80 constitute a propeptide that is removed on maturation; it reads DDQQDNGKFYGHYAEDNGKHWYDTGDQ.

As to expression, hemocytes and pharyngeal tissues.

It localises to the secreted. Its function is as follows. Has antimicrobial activity against E.coli, L.monocytogenes and C.albicans. In Styela clava (Sea squirt), this protein is Clavanin-D.